The chain runs to 106 residues: uncharacterized protein (106 aa).

2 helical membrane-spanning segments follow: residues 25-45 and 62-82; these read VMNV…IHYI and ICFL…NFQG.

It localises to the membrane. This is an uncharacterized protein from Saccharomyces cerevisiae (strain ATCC 204508 / S288c) (Baker's yeast).